We begin with the raw amino-acid sequence, 523 residues long: ATP-dependent RNA helicase DBP3 (523 aa).

A compositionally biased stretch (basic and acidic residues) spans 1–21; that stretch reads MTKEEIADKKRKVVDEEVIEK. Positions 1–71 are disordered; it reads MTKEEIADKK…SEKKPEPTSA (71 aa). Over residues 22–48 the composition is skewed to basic residues; that stretch reads KKSKKHKKDKKDKKEKKDKKHKKHKKE. Over residues 49–67 the composition is skewed to basic and acidic residues; the sequence is KKGEKEVEVPEKESEKKPE. Positions 114–140 match the Q motif motif; the sequence is LSFDYLSLDSSIQAEISKFPKPTPIQA. The Helicase ATP-binding domain maps to 143–315; that stretch reads WPYLLSGKDV…STFMNNPIKV (173 aa). Residue 156 to 163 participates in ATP binding; sequence AETGSGKT. Residues 262 to 265 carry the DEAD box motif; sequence DEAD. Residues 344–493 form the Helicase C-terminal domain; that stretch reads KLLELLKKYH…PVPEDLIKFG (150 aa).

Belongs to the DEAD box helicase family. DDX5/DBP2 subfamily.

The protein resides in the nucleus. Its subcellular location is the nucleolus. It carries out the reaction ATP + H2O = ADP + phosphate + H(+). ATP-dependent RNA helicase required for 60S ribosomal subunit synthesis. Involved in efficient pre-rRNA processing, predominantly at site A3, which is necessary for the normal formation of 25S and 5.8S rRNAs. This Saccharomyces cerevisiae (strain ATCC 204508 / S288c) (Baker's yeast) protein is ATP-dependent RNA helicase DBP3 (DBP3).